We begin with the raw amino-acid sequence, 200 residues long: Putative peroxiredoxin sll0755 (200 aa).

Positions 5–163 constitute a Thioredoxin domain; sequence LRVGQPAPDF…TLRVLKAIRH (159 aa). Cysteine 50 (cysteine sulfenic acid (-SOH) intermediate) is an active-site residue.

The protein belongs to the peroxiredoxin family. AhpC/Prx1 subfamily. In terms of assembly, homodimer; disulfide-linked, upon oxidation.

The protein localises to the cytoplasm. The enzyme catalyses a hydroperoxide + [thioredoxin]-dithiol = an alcohol + [thioredoxin]-disulfide + H2O. Its function is as follows. Thiol-specific peroxidase that catalyzes the reduction of hydrogen peroxide and organic hydroperoxides to water and alcohols, respectively. Plays a role in cell protection against oxidative stress by detoxifying peroxides. This chain is Putative peroxiredoxin sll0755, found in Synechocystis sp. (strain ATCC 27184 / PCC 6803 / Kazusa).